The primary structure comprises 614 residues: Glutamine--fructose-6-phosphate aminotransferase [isomerizing] (614 aa).

Catalysis depends on Cys2, which acts as the Nucleophile; for GATase activity. The 222-residue stretch at 2–223 (CGIIGYIGRR…DGEMAVVTRD (222 aa)) folds into the Glutamine amidotransferase type-2 domain. SIS domains are found at residues 292–431 (YLDR…GRTI) and 463–604 (IAVK…VDRP). Lys609 serves as the catalytic For Fru-6P isomerization activity.

As to quaternary structure, homodimer.

The protein resides in the cytoplasm. The enzyme catalyses D-fructose 6-phosphate + L-glutamine = D-glucosamine 6-phosphate + L-glutamate. Catalyzes the first step in hexosamine metabolism, converting fructose-6P into glucosamine-6P using glutamine as a nitrogen source. The polypeptide is Glutamine--fructose-6-phosphate aminotransferase [isomerizing] (Chlorobaculum tepidum (strain ATCC 49652 / DSM 12025 / NBRC 103806 / TLS) (Chlorobium tepidum)).